The primary structure comprises 1115 residues: Calcium-transporting ATPase PAT1 (1115 aa).

Over 1–99 (MTGSHEMESI…SIVLDALSDH (99 aa)) the chain is Stromal. Residues 100-120 (ILILLIVAAVVSIVLGSIDYT) traverse the membrane as a helical segment. Over 121–126 (SDHPET) the chain is Lumenal. Residues 127–147 (GWIDGVAILVAVILVVGITSL) form a helical membrane-spanning segment. Residues 148–235 (NDFKNQARFR…KGQPQDNMDP (88 aa)) lie on the Stromal side of the membrane. Residues 236–256 (FLISGSMVIEGFGTMLVTAVG) form a helical membrane-spanning segment. The Lumenal portion of the chain corresponds to 257-287 (VNSFNGKTMMGLRVASEDTPLQMKLSVLASR). A helical transmembrane segment spans residues 288-308 (IGYFGMGAAILMLLIAIPKYF). The Stromal portion of the chain corresponds to 309–328 (IQRKVHDIEITREDAQPIVQ). Residues 329–349 (LVISAITIVVVAVPEGLPLAV) traverse the membrane as a helical segment. Residues 350 to 735 (TMALAYGMMK…GRNIYDAICK (386 aa)) are Lumenal-facing. Asp385 (4-aspartylphosphate intermediate) is an active-site residue. The Mg(2+) site is built by Asp678 and Asp682. The helical transmembrane segment at 736-756 (FLQFQLTVNVVAVTVAFIGTL) threads the bilayer. The Stromal segment spans residues 757–832 (TSDVVEDKDN…GKNAPLITRS (76 aa)). The interval 762–784 (EDKDNSSSSGSADKVTEEEPRQG) is disordered. The chain crosses the membrane as a helical span at residues 833-853 (MWKNIIGQAALQLAILFTILY). Over 854 to 873 (QGHNIFQHFVPQAHGPIIKN) the chain is Lumenal. A helical membrane pass occupies residues 874 to 894 (GLHHYTLVFNCFVFLQLFNEI). Over 895–913 (NARVLGSRTNPFKNFFNNP) the chain is Stromal. A helical membrane pass occupies residues 914-934 (IFIAVMIFTLGVQIIFVTFGG). The Lumenal segment spans residues 935–943 (SATSTDSLY). The chain crosses the membrane as a helical span at residues 944 to 964 (IVEWICCVVVGAISLPVGLLL). Residues 965 to 1115 (RKIPIREPVV…LHLPVNQINN (151 aa)) lie on the Stromal side of the membrane. Residues 984-1056 (AVYTSPSPNP…IPSSSSNLVN (73 aa)) are disordered. Residues 1040-1053 (NDNINTPIPSSSSN) are compositionally biased toward low complexity.

The protein belongs to the cation transport ATPase (P-type) (TC 3.A.3) family. Type IIB subfamily.

The protein localises to the contractile vacuole membrane. It localises to the cell membrane. It carries out the reaction Ca(2+)(in) + ATP + H2O = Ca(2+)(out) + ADP + phosphate + H(+). Functionally, calcium ATPase involved in Ca(2+) homeostasis as a component of the contractile vacuole complex. The polypeptide is Calcium-transporting ATPase PAT1 (patA) (Dictyostelium discoideum (Social amoeba)).